The chain runs to 116 residues: Putative iron-sulfur cluster insertion protein ErpA (116 aa).

Residues cysteine 44, cysteine 108, and cysteine 110 each coordinate iron-sulfur cluster.

This sequence belongs to the HesB/IscA family. Homodimer. It depends on iron-sulfur cluster as a cofactor.

Required for insertion of 4Fe-4S clusters. This is Putative iron-sulfur cluster insertion protein ErpA from Aromatoleum aromaticum (strain DSM 19018 / LMG 30748 / EbN1) (Azoarcus sp. (strain EbN1)).